A 231-amino-acid polypeptide reads, in one-letter code: Large ribosomal subunit protein uL1 (231 aa).

Belongs to the universal ribosomal protein uL1 family. As to quaternary structure, part of the 50S ribosomal subunit.

Functionally, binds directly to 23S rRNA. The L1 stalk is quite mobile in the ribosome, and is involved in E site tRNA release. Its function is as follows. Protein L1 is also a translational repressor protein, it controls the translation of the L11 operon by binding to its mRNA. This Kosmotoga olearia (strain ATCC BAA-1733 / DSM 21960 / TBF 19.5.1) protein is Large ribosomal subunit protein uL1.